The chain runs to 269 residues: Triosephosphate isomerase (269 aa).

8–10 (NWK) is a substrate binding site. His105 acts as the Electrophile in catalysis. The active-site Proton acceptor is Glu183. Substrate-binding positions include Gly189, Ser227, and 248–249 (GG).

It belongs to the triosephosphate isomerase family. As to quaternary structure, homodimer.

The protein localises to the cytoplasm. It carries out the reaction D-glyceraldehyde 3-phosphate = dihydroxyacetone phosphate. It functions in the pathway carbohydrate biosynthesis; gluconeogenesis. It participates in carbohydrate degradation; glycolysis; D-glyceraldehyde 3-phosphate from glycerone phosphate: step 1/1. Its function is as follows. Involved in the gluconeogenesis. Catalyzes stereospecifically the conversion of dihydroxyacetone phosphate (DHAP) to D-glyceraldehyde-3-phosphate (G3P). The protein is Triosephosphate isomerase of Psychrobacter arcticus (strain DSM 17307 / VKM B-2377 / 273-4).